Here is a 306-residue protein sequence, read N- to C-terminus: Pantothenate kinase (306 aa).

90-97 lines the ATP pocket; it reads GSVAVGKS.

The protein belongs to the prokaryotic pantothenate kinase family.

Its subcellular location is the cytoplasm. The catalysed reaction is (R)-pantothenate + ATP = (R)-4'-phosphopantothenate + ADP + H(+). It functions in the pathway cofactor biosynthesis; coenzyme A biosynthesis; CoA from (R)-pantothenate: step 1/5. The sequence is that of Pantothenate kinase from Ligilactobacillus salivarius (strain UCC118) (Lactobacillus salivarius).